The sequence spans 258 residues: 5-oxoprolinase subunit A 2 (258 aa).

This sequence belongs to the LamB/PxpA family. In terms of assembly, forms a complex composed of PxpA, PxpB and PxpC.

The catalysed reaction is 5-oxo-L-proline + ATP + 2 H2O = L-glutamate + ADP + phosphate + H(+). In terms of biological role, catalyzes the cleavage of 5-oxoproline to form L-glutamate coupled to the hydrolysis of ATP to ADP and inorganic phosphate. The chain is 5-oxoprolinase subunit A 2 from Pseudomonas putida (strain ATCC 47054 / DSM 6125 / CFBP 8728 / NCIMB 11950 / KT2440).